The chain runs to 361 residues: Ribosomal RNA large subunit methyltransferase M (361 aa).

S-adenosyl-L-methionine is bound by residues Ser-187, 220 to 223 (CPGG), Asp-239, Asp-259, and Asp-276. The Proton acceptor role is filled by Lys-305.

Belongs to the class I-like SAM-binding methyltransferase superfamily. RNA methyltransferase RlmE family. RlmM subfamily. Monomer.

It localises to the cytoplasm. The enzyme catalyses cytidine(2498) in 23S rRNA + S-adenosyl-L-methionine = 2'-O-methylcytidine(2498) in 23S rRNA + S-adenosyl-L-homocysteine + H(+). Functionally, catalyzes the 2'-O-methylation at nucleotide C2498 in 23S rRNA. The sequence is that of Ribosomal RNA large subunit methyltransferase M from Shewanella baltica (strain OS223).